Consider the following 463-residue polypeptide: Probable diacyglycerol O-acyltransferase tgs1 (463 aa).

Catalysis depends on H137, which acts as the Proton acceptor.

This sequence belongs to the long-chain O-acyltransferase family.

The catalysed reaction is an acyl-CoA + a 1,2-diacyl-sn-glycerol = a triacyl-sn-glycerol + CoA. Its pathway is glycerolipid metabolism; triacylglycerol biosynthesis. Its function is as follows. Catalyzes the terminal and only committed step in triacylglycerol synthesis by using diacylglycerol and fatty acyl CoA as substrates. Required for storage lipid synthesis. The protein is Probable diacyglycerol O-acyltransferase tgs1 (tgs1) of Mycobacterium tuberculosis (strain CDC 1551 / Oshkosh).